Here is a 307-residue protein sequence, read N- to C-terminus: Ubiquitin recognition factor in ER-associated degradation protein 1 (307 aa).

Residue M1 is modified to N-acetylmethionine. S129, S231, S245, S247, and S299 each carry phosphoserine. Disordered regions lie at residues 230-255 (GSGN…GDIK) and 282-307 (EEDE…GRKP).

This sequence belongs to the UFD1 family. As to quaternary structure, interacts with USP13. Heterodimer with NPLOC4, this heterodimer binds VCP and inhibits Golgi membrane fusion. Interacts with ZFAND2B; probably through VCP.

The protein resides in the nucleus. It localises to the cytoplasm. The protein localises to the cytosol. The protein operates within protein degradation; proteasomal ubiquitin-dependent pathway. Essential component of the ubiquitin-dependent proteolytic pathway which degrades ubiquitin fusion proteins. The ternary complex containing UFD1, VCP and NPLOC4 binds ubiquitinated proteins and is necessary for the export of misfolded proteins from the ER to the cytoplasm, where they are degraded by the proteasome. The NPLOC4-UFD1-VCP complex regulates spindle disassembly at the end of mitosis and is necessary for the formation of a closed nuclear envelope. It may be involved in the development of some ectoderm-derived structures. Acts as a negative regulator of type I interferon production via the complex formed with VCP and NPLOC4, which binds to RIGI and recruits RNF125 to promote ubiquitination and degradation of RIGI. The polypeptide is Ubiquitin recognition factor in ER-associated degradation protein 1 (Rattus norvegicus (Rat)).